The following is a 48-amino-acid chain: Large ribosomal subunit protein bL33A (48 aa).

The protein belongs to the bacterial ribosomal protein bL33 family.

The sequence is that of Large ribosomal subunit protein bL33A from Streptococcus agalactiae serotype V (strain ATCC BAA-611 / 2603 V/R).